We begin with the raw amino-acid sequence, 226 residues long: MENAGKATSLQSSRDLFHRLMSENSSGGWEKSWEAGATPWDLGKPTPVIAHLVETGSLPNGRALVPGCGTGYDVVAMASPDRHVVGLDISKTAVERSTKKFSTLPNAKYFSFLSEDFFTWEPAEKFDLIFDYTFFCAFEPGVRPLWAQRMEKLLKPGGELITLMFPIDERSGGPPYEVSVSEYEKVLIPLGFEAISIVDNELAVGPRKGMEKLGRWKKSSTFHSTL.

Positions 29, 33, 40, and 67 each coordinate S-adenosyl-L-methionine. Ser-79 carries the post-translational modification Phosphoserine. Residues Asp-88, 116–117 (DF), and Tyr-132 contribute to the S-adenosyl-L-methionine site.

This sequence belongs to the class I-like SAM-binding methyltransferase superfamily. TPMT family.

It catalyses the reaction a thiol + S-adenosyl-L-methionine = a methyl thioether + S-adenosyl-L-homocysteine + H(+). S-adenosyl-L-methionine-dependent methyltransferase. The protein is Probable thiol methyltransferase 2 (HOL3) of Arabidopsis thaliana (Mouse-ear cress).